The chain runs to 543 residues: Probable bifunctional tRNA threonylcarbamoyladenosine biosynthesis protein (543 aa).

Residues 1 to 329 (MDISKDLICI…YRSDMVEVNW (329 aa)) form a kae1 region. Residues H112, H116, and Y133 each contribute to the Fe cation site. L-threonylcarbamoyladenylate is bound by residues 133 to 137 (YVSGG), D165, G178, E182, and N262. D290 lines the Fe cation pocket. A Protein kinase domain is found at 342 to 543 (IIPEHLIGKG…KEVEKRARYL (202 aa)). ATP contacts are provided by residues 348 to 356 (IGKGAEADI) and K369. The active-site Proton acceptor; for kinase activity is D461.

This sequence in the N-terminal section; belongs to the KAE1 / TsaD family. The protein in the C-terminal section; belongs to the protein kinase superfamily. Tyr protein kinase family. BUD32 subfamily. Component of the KEOPS complex that consists of Kae1, Bud32, Cgi121 and Pcc1; the whole complex dimerizes. Fe(2+) serves as cofactor.

The protein localises to the cytoplasm. It catalyses the reaction L-seryl-[protein] + ATP = O-phospho-L-seryl-[protein] + ADP + H(+). It carries out the reaction L-threonyl-[protein] + ATP = O-phospho-L-threonyl-[protein] + ADP + H(+). The enzyme catalyses L-threonylcarbamoyladenylate + adenosine(37) in tRNA = N(6)-L-threonylcarbamoyladenosine(37) in tRNA + AMP + H(+). In terms of biological role, required for the formation of a threonylcarbamoyl group on adenosine at position 37 (t(6)A37) in tRNAs that read codons beginning with adenine. Is a component of the KEOPS complex that is probably involved in the transfer of the threonylcarbamoyl moiety of threonylcarbamoyl-AMP (TC-AMP) to the N6 group of A37. The Kae1 domain likely plays a direct catalytic role in this reaction. The Bud32 domain probably displays kinase activity that regulates Kae1 function. This chain is Probable bifunctional tRNA threonylcarbamoyladenosine biosynthesis protein, found in Methanococcus maripaludis (strain C6 / ATCC BAA-1332).